The chain runs to 541 residues: uncharacterized protein (541 aa).

The next 12 membrane-spanning stretches (helical) occupy residues 99 to 119 (WIVVVQISLIAFVVTFGSSVY), 131 to 153 (GVSISVSSLGSCVFLVGFGFGSL), 165 to 185 (FVVYFCTLLMFTLFQIGGGCA), 187 to 207 (NIWTLVILRFFQGFFGSTPLS), 224 to 244 (YVLPGFCTFPFLGPIFGPIIG), 256 to 276 (WVFWINMIMGAVVIVIIFFFM), 325 to 345 (LLITEPIVVCFTLYLTVVYII), 367 to 387 (IGLSFIGIGIGIVLAGACTPI), 409 to 429 (LYPLFFGSIMLPISMFWFAWT), 439 to 459 (WIVPLISSIFFGWSLLFVFFV), 472 to 494 (AASALAAATLVRYAASGGMSLVG), and 508 to 528 (SLLGFISVGMIPIPFLFFIYG).

Belongs to the major facilitator superfamily. CAR1 family.

The protein resides in the membrane. This is an uncharacterized protein from Schizosaccharomyces pombe (strain 972 / ATCC 24843) (Fission yeast).